Here is a 142-residue protein sequence, read N- to C-terminus: uncharacterized protein (142 aa).

This is an uncharacterized protein from Gallid herpesvirus 2 (strain GA) (GaHV-2).